Here is a 402-residue protein sequence, read N- to C-terminus: MTSIIARMSNSRRQNTSLPPWAHSMLRSLERSLGPLMAILAERNLKLFSGRVVPAQGEETFENWLIQVNEVLPDWNMSEEEKLRRLIKTLRGPAREVMLLLQAANPNLSVADFLHAMKLVFGESESSVTAHSKFFNTLQAQGEKASLYVIRLEVQLQNAIQAGIIAQKDANQSRLHQFLLGAELNGDLRFRLKNLLRMYANEQERLPSFLELIRMIREEEDWDDIFIKQKRAKRSESVVARATRPVAFGGSPPIVIDNKDCNVIEIDDTPDDSDEDVILVGESQDLPRSFSDSPPSRRRARPQDQVLIIDSPNNSQFPSPCTSGGSGYKNDGPGNMRRTRKRKHTIRCSYCGEEGHSKETCDNESNKAQMFENLIITLQELAHTEERSREAPVEPSDPCELQ.

Positions 268–277 are enriched in acidic residues; sequence DTPDDSDEDV. The tract at residues 268–342 is disordered; the sequence is DTPDDSDEDV…PGNMRRTRKR (75 aa). Polar residues predominate over residues 311 to 323; it reads SPNNSQFPSPCTS. The CCHC-type zinc finger occupies 346-363; it reads IRCSYCGEEGHSKETCDN. Residues 383–392 show a composition bias toward basic and acidic residues; sequence HTEERSREAP. Residues 383–402 are disordered; the sequence is HTEERSREAPVEPSDPCELQ.

It belongs to the ZCCHC12 family. In terms of assembly, interacts with SMAD1 and CREB-binding protein (CBP). Forms a protein-DNA complex through its association with SMAD1.

Functionally, transcriptional coactivator in the bone morphogenetic protein (BMP)-signaling pathway. It positively modulates BMP signaling by interacting with SMAD1 and associating with CBP in the transcription complex. It contributes to the BMP-induced enhancement of cholinergic-neuron-specific gene expression. The polypeptide is Zinc finger CCHC domain-containing protein 12 (ZCCHC12) (Bos taurus (Bovine)).